Consider the following 79-residue polypeptide: RNA-binding protein Hfq (79 aa).

In terms of domain architecture, Sm spans 10–69 (DPFLNALRKEHVPVSIYLVNGIKLQGNIESFDQYVVLLRNTVTQMVYKHAISTVVPARPV).

This sequence belongs to the Hfq family. In terms of assembly, homohexamer.

Functionally, RNA chaperone that binds small regulatory RNA (sRNAs) and mRNAs to facilitate mRNA translational regulation in response to envelope stress, environmental stress and changes in metabolite concentrations. Also binds with high specificity to tRNAs. The polypeptide is RNA-binding protein Hfq (Burkholderia cenocepacia (strain HI2424)).